Here is a 417-residue protein sequence, read N- to C-terminus: N-acetylmuramoyl-L-alanine amidase AmiC (417 aa).

The tat-type signal signal peptide spans 1 to 31 (MSGSNTAISRRRLLQGAGAMWLLSVSQVSLA). A disordered region spans residues 166 to 185 (LEKQVPPAQSGPQPGKAGRD). A MurNAc-LAA domain is found at 190 to 404 (IMLDPGHGGE…VAESILAGIK (215 aa)).

This sequence belongs to the N-acetylmuramoyl-L-alanine amidase 3 family. In terms of processing, predicted to be exported by the Tat system. The position of the signal peptide cleavage has not been experimentally proven.

Its subcellular location is the periplasm. It carries out the reaction Hydrolyzes the link between N-acetylmuramoyl residues and L-amino acid residues in certain cell-wall glycopeptides.. Its function is as follows. Cell-wall hydrolase involved in septum cleavage during cell division. The polypeptide is N-acetylmuramoyl-L-alanine amidase AmiC (amiC) (Escherichia coli O6:H1 (strain CFT073 / ATCC 700928 / UPEC)).